The sequence spans 276 residues: Pantothenate synthetase (276 aa).

27 to 34 (MGALHKGH) contacts ATP. The active-site Proton donor is the His-34. A (R)-pantoate-binding site is contributed by Gln-58. Residue Gln-58 coordinates beta-alanine. 147–150 (GKKD) is an ATP binding site. Gln-153 is a (R)-pantoate binding site. Residues Val-176 and 184-187 (LSSR) each bind ATP.

This sequence belongs to the pantothenate synthetase family. Homodimer.

The protein localises to the cytoplasm. The catalysed reaction is (R)-pantoate + beta-alanine + ATP = (R)-pantothenate + AMP + diphosphate + H(+). Its pathway is cofactor biosynthesis; (R)-pantothenate biosynthesis; (R)-pantothenate from (R)-pantoate and beta-alanine: step 1/1. In terms of biological role, catalyzes the condensation of pantoate with beta-alanine in an ATP-dependent reaction via a pantoyl-adenylate intermediate. The protein is Pantothenate synthetase of Helicobacter acinonychis (strain Sheeba).